We begin with the raw amino-acid sequence, 394 residues long: Elongation factor Tu (394 aa).

The tr-type G domain maps to 10 to 204; that stretch reads KPHVNIGTIG…AVDSYIPQPV (195 aa). A G1 region spans residues 19-26; sequence GHVDHGKT. 19–26 is a GTP binding site; sequence GHVDHGKT. T26 is a binding site for Mg(2+). Residues 60-64 form a G2 region; that stretch reads GITIS. Positions 81-84 are G3; it reads DCPG. GTP contacts are provided by residues 81-85 and 136-139; these read DCPGH and NKID. The interval 136 to 139 is G4; that stretch reads NKID. Positions 174 to 176 are G5; the sequence is SAL.

Belongs to the TRAFAC class translation factor GTPase superfamily. Classic translation factor GTPase family. EF-Tu/EF-1A subfamily. In terms of assembly, monomer.

It localises to the cytoplasm. It catalyses the reaction GTP + H2O = GDP + phosphate + H(+). Functionally, GTP hydrolase that promotes the GTP-dependent binding of aminoacyl-tRNA to the A-site of ribosomes during protein biosynthesis. The polypeptide is Elongation factor Tu (Rickettsia rickettsii).